A 514-amino-acid polypeptide reads, in one-letter code: Maturase K (514 aa).

The protein belongs to the intron maturase 2 family. MatK subfamily.

The protein resides in the plastid. It is found in the chloroplast. Functionally, usually encoded in the trnK tRNA gene intron. Probably assists in splicing its own and other chloroplast group II introns. This Tsuga canadensis (Eastern hemlock) protein is Maturase K.